Here is a 197-residue protein sequence, read N- to C-terminus: HTH-type transcriptional regulator BetI (197 aa).

An HTH tetR-type domain is found at 8-68 (PIRRSQLIHA…ATMRHLLSAL (61 aa)). Residues 31–50 (SIALIARLAGVSNGIISHYF) constitute a DNA-binding region (H-T-H motif).

It functions in the pathway amine and polyamine biosynthesis; betaine biosynthesis via choline pathway [regulation]. Functionally, repressor involved in the biosynthesis of the osmoprotectant glycine betaine. It represses transcription of the choline transporter BetT and the genes of BetAB involved in the synthesis of glycine betaine. The chain is HTH-type transcriptional regulator BetI from Pseudomonas aeruginosa (strain LESB58).